A 150-amino-acid polypeptide reads, in one-letter code: Protein ADM2 (150 aa).

An N-terminal signal peptide occupies residues 1-25 (MAQLLMVTVTLGCISLLYLLPGTLS). A propeptide spanning residues 26 to 100 (GSLGKGLRHS…HPGPQRPTGS (75 aa)) is cleaved from the precursor. The disordered stretch occupies residues 28–102 (LGKGLRHSRP…GPQRPTGSRR (75 aa)). Cys112 and Cys117 are joined by a disulfide. Tyrosine amide is present on Tyr149.

Belongs to the adrenomedullin family. As to expression, high expression detected in the submaxillary gland, kidney, stomach, and mesentery, followed by the pituitary, lung, pancreas, intestines, spleen, thymus and ovary. Expressed mainly in the intermediate lobe of the pituitary, with sporadic in the anterior lobe.

The protein localises to the secreted. Functionally, intermedin/ADM2 is a peptide hormone that plays a role as physiological regulator of gastrointestinal and cardiovascular bioactivities mediated by the CALCRL-RAMPs receptor complexes. Activates the cAMP-dependent pathway through interaction with CALCRL-RAMP3 receptor complex. This Mus musculus (Mouse) protein is Protein ADM2.